A 130-amino-acid chain; its full sequence is Small ribosomal subunit protein uS9 (130 aa).

The span at 99–110 (KKAGFLTRDPRM) shows a compositional bias: basic and acidic residues. The segment at 99–130 (KKAGFLTRDPRMKERKKYGLKKARRAPQFSKR) is disordered. Residues 111–130 (KERKKYGLKKARRAPQFSKR) are compositionally biased toward basic residues.

The protein belongs to the universal ribosomal protein uS9 family.

The sequence is that of Small ribosomal subunit protein uS9 from Clostridium botulinum (strain Eklund 17B / Type B).